The following is a 319-amino-acid chain: BTB/POZ domain-containing adapter for CUL3-mediated RhoA degradation protein 2 (319 aa).

Residues 31–99 (KYIRLNVGGC…LRDDTIALPK (69 aa)) enclose the BTB domain.

Belongs to the BACURD family. Component of the BCR(TNFAIP1) E3 ubiquitin ligase complex, at least composed of cul3, tnfaip1/bacurd2 and rbx1.

It localises to the cytoplasm. It is found in the nucleus. The protein localises to the endosome. It participates in protein modification; protein ubiquitination. In terms of biological role, substrate-specific adapter of a BCR (BTB-CUL3-RBX1) E3 ubiquitin-protein ligase complex involved in regulation of cytoskeleton structure. The BCR(TNFAIP1) E3 ubiquitin ligase complex mediates the ubiquitination of target proteins, leading to their degradation by the proteasome. This chain is BTB/POZ domain-containing adapter for CUL3-mediated RhoA degradation protein 2 (tnfaip1), found in Xenopus laevis (African clawed frog).